A 406-amino-acid polypeptide reads, in one-letter code: Dual-specificity RNA methyltransferase RlmN (406 aa).

E121 functions as the Proton acceptor in the catalytic mechanism. The Radical SAM core domain maps to 127–377 (ERDRGTLCVS…VRTPRGRDIL (251 aa)). C134 and C380 are disulfide-bonded. Residues C141, C145, and C148 each coordinate [4Fe-4S] cluster. Residues 206–207 (GE), S238, 260–262 (SLH), and N337 each bind S-adenosyl-L-methionine. C380 (S-methylcysteine intermediate) is an active-site residue.

This sequence belongs to the radical SAM superfamily. RlmN family. [4Fe-4S] cluster serves as cofactor.

The protein resides in the cytoplasm. It carries out the reaction adenosine(2503) in 23S rRNA + 2 reduced [2Fe-2S]-[ferredoxin] + 2 S-adenosyl-L-methionine = 2-methyladenosine(2503) in 23S rRNA + 5'-deoxyadenosine + L-methionine + 2 oxidized [2Fe-2S]-[ferredoxin] + S-adenosyl-L-homocysteine. It catalyses the reaction adenosine(37) in tRNA + 2 reduced [2Fe-2S]-[ferredoxin] + 2 S-adenosyl-L-methionine = 2-methyladenosine(37) in tRNA + 5'-deoxyadenosine + L-methionine + 2 oxidized [2Fe-2S]-[ferredoxin] + S-adenosyl-L-homocysteine. Functionally, specifically methylates position 2 of adenine 2503 in 23S rRNA and position 2 of adenine 37 in tRNAs. m2A2503 modification seems to play a crucial role in the proofreading step occurring at the peptidyl transferase center and thus would serve to optimize ribosomal fidelity. The chain is Dual-specificity RNA methyltransferase RlmN from Azorhizobium caulinodans (strain ATCC 43989 / DSM 5975 / JCM 20966 / LMG 6465 / NBRC 14845 / NCIMB 13405 / ORS 571).